The following is a 162-amino-acid chain: Regulator of sigma D (162 aa).

The protein belongs to the Rsd/AlgQ family. As to quaternary structure, interacts with RpoD.

It localises to the cytoplasm. Binds RpoD and negatively regulates RpoD-mediated transcription activation by preventing the interaction between the primary sigma factor RpoD with the catalytic core of the RNA polymerase and with promoter DNA. May be involved in replacement of the RNA polymerase sigma subunit from RpoD to RpoS during the transition from exponential growth to the stationary phase. In Salmonella agona (strain SL483), this protein is Regulator of sigma D.